A 114-amino-acid chain; its full sequence is Tyrosine-protein phosphatase 13 (114 aa).

Residues 1 to 114 (WRMLWEHNST…QFGQEGPITI (114 aa)) form the Tyrosine-protein phosphatase domain. Glu82 lines the substrate pocket.

This sequence belongs to the protein-tyrosine phosphatase family.

The enzyme catalyses O-phospho-L-tyrosyl-[protein] + H2O = L-tyrosyl-[protein] + phosphate. The protein is Tyrosine-protein phosphatase 13 (STY-13) of Styela plicata (Wrinkled sea squirt).